Consider the following 375-residue polypeptide: Chaperone protein DnaJ (375 aa).

Positions 5 to 70 (DYYEILGVSK…QKRAAYDQYG (66 aa)) constitute a J domain. A CR-type zinc finger spans residues 130–208 (GVTKEIRIPT…CHGHGRVEKS (79 aa)). The Zn(2+) site is built by Cys143, Cys146, Cys160, Cys163, Cys182, Cys185, Cys196, and Cys199. CXXCXGXG motif repeat units lie at residues 143–150 (CDVCHGSG), 160–167 (CPTCHGSG), 182–189 (CPHCQGRG), and 196–203 (CHKCHGHG).

Belongs to the DnaJ family. Homodimer. Zn(2+) serves as cofactor.

Its subcellular location is the cytoplasm. Its function is as follows. Participates actively in the response to hyperosmotic and heat shock by preventing the aggregation of stress-denatured proteins and by disaggregating proteins, also in an autonomous, DnaK-independent fashion. Unfolded proteins bind initially to DnaJ; upon interaction with the DnaJ-bound protein, DnaK hydrolyzes its bound ATP, resulting in the formation of a stable complex. GrpE releases ADP from DnaK; ATP binding to DnaK triggers the release of the substrate protein, thus completing the reaction cycle. Several rounds of ATP-dependent interactions between DnaJ, DnaK and GrpE are required for fully efficient folding. Also involved, together with DnaK and GrpE, in the DNA replication of plasmids through activation of initiation proteins. The sequence is that of Chaperone protein DnaJ from Salmonella paratyphi A (strain ATCC 9150 / SARB42).